Reading from the N-terminus, the 194-residue chain is Imidazoleglycerol-phosphate dehydratase (194 aa).

The protein belongs to the imidazoleglycerol-phosphate dehydratase family.

The protein resides in the cytoplasm. It catalyses the reaction D-erythro-1-(imidazol-4-yl)glycerol 3-phosphate = 3-(imidazol-4-yl)-2-oxopropyl phosphate + H2O. Its pathway is amino-acid biosynthesis; L-histidine biosynthesis; L-histidine from 5-phospho-alpha-D-ribose 1-diphosphate: step 6/9. The sequence is that of Imidazoleglycerol-phosphate dehydratase from Chlorobaculum parvum (strain DSM 263 / NCIMB 8327) (Chlorobium vibrioforme subsp. thiosulfatophilum).